The chain runs to 338 residues: Lipoyl synthase (338 aa).

The tract at residues 1 to 22 is disordered; it reads MTTVQEAVPNLIPTQDVTPRPA. The [4Fe-4S] cluster site is built by C84, C89, C95, C110, C114, C117, and S324. One can recognise a Radical SAM core domain in the interval 96-313; it reads FSGGTATFMI…AEEGYKMGFK (218 aa).

It belongs to the radical SAM superfamily. Lipoyl synthase family. It depends on [4Fe-4S] cluster as a cofactor.

It is found in the cytoplasm. It catalyses the reaction [[Fe-S] cluster scaffold protein carrying a second [4Fe-4S](2+) cluster] + N(6)-octanoyl-L-lysyl-[protein] + 2 oxidized [2Fe-2S]-[ferredoxin] + 2 S-adenosyl-L-methionine + 4 H(+) = [[Fe-S] cluster scaffold protein] + N(6)-[(R)-dihydrolipoyl]-L-lysyl-[protein] + 4 Fe(3+) + 2 hydrogen sulfide + 2 5'-deoxyadenosine + 2 L-methionine + 2 reduced [2Fe-2S]-[ferredoxin]. The protein operates within protein modification; protein lipoylation via endogenous pathway; protein N(6)-(lipoyl)lysine from octanoyl-[acyl-carrier-protein]: step 2/2. In terms of biological role, catalyzes the radical-mediated insertion of two sulfur atoms into the C-6 and C-8 positions of the octanoyl moiety bound to the lipoyl domains of lipoate-dependent enzymes, thereby converting the octanoylated domains into lipoylated derivatives. In Pseudomonas entomophila (strain L48), this protein is Lipoyl synthase.